Reading from the N-terminus, the 764-residue chain is Metabotropic glutamate receptor-like protein H (764 aa).

Residues 1–20 (MKNILKILILILICINKINC) form the signal peptide. Residues 21–393 (LDGDGKQFRM…EVEFSQSIQN (373 aa)) lie on the Extracellular side of the membrane. N72, N260, N278, N344, and N379 each carry an N-linked (GlcNAc...) asparagine glycan. The helical transmembrane segment at 394 to 414 (GFSITTGILIGITILMMIGII) threads the bilayer. Residues 415–427 (KYSKTPSMRSASP) lie on the Cytoplasmic side of the membrane. A helical membrane pass occupies residues 428–448 (IFLNFILAGGIIVYIGIIVWV). Residues 449–464 (GPMSTHSCNARLWLVT) are Extracellular-facing. The chain crosses the membrane as a helical span at residues 465 to 485 (LGFSTLIGSLVVKNFRIWLIF). At 486-500 (DNPELKSIKITNYQL) the chain is on the cytoplasmic side. Residues 501–521 (FPWVGACLVINIILMAILTSV) form a helical membrane-spanning segment. The Extracellular portion of the chain corresponds to 522–552 (GDLKQIDAMNIDSLGKYEYMKVCKMNSSGAS). The N-linked (GlcNAc...) asparagine glycan is linked to N547. The chain crosses the membrane as a helical span at residues 553 to 573 (TLYTILAYFAALLLVGVFVSW). Residues 574-587 (KIRIVDILEFNESG) lie on the Cytoplasmic side of the membrane. The helical transmembrane segment at 588–608 (AIANTLYAISFCLFVIVPLMI) threads the bilayer. At 609–617 (SPQDMQSET) the chain is on the extracellular side. Residues 618-638 (IILCTTGLFITTAALLIIFIP) traverse the membrane as a helical segment. Residues 639–764 (KFWRVFRKGA…IIVNDSENNN (126 aa)) lie on the Cytoplasmic side of the membrane. Positions 664-764 (ATARAESGSK…IIVNDSENNN (101 aa)) are disordered. Over residues 671 to 690 (GSKGSNGNASSGNRTNRRGN) the composition is skewed to low complexity. Positions 707 to 719 (ENQKEKEKIKDDV) are enriched in basic and acidic residues. The segment covering 731-748 (FTDEASDTDNNEFNDIEL) has biased composition (acidic residues).

The protein in the N-terminal section; belongs to the BMP lipoprotein family. It in the C-terminal section; belongs to the G-protein coupled receptor 3 family. GABA-B receptor subfamily.

It localises to the membrane. This is Metabotropic glutamate receptor-like protein H (grlH) from Dictyostelium discoideum (Social amoeba).